Here is a 401-residue protein sequence, read N- to C-terminus: Argininosuccinate synthase (401 aa).

9–17 (AYSGGLDTS) serves as a coordination point for ATP. Y86 contacts L-citrulline. G116 lines the ATP pocket. T118, N122, and D123 together coordinate L-aspartate. N122 is a binding site for L-citrulline. Positions 126, 174, 183, 259, and 271 each coordinate L-citrulline.

This sequence belongs to the argininosuccinate synthase family. Type 1 subfamily. Homotetramer.

The protein localises to the cytoplasm. It catalyses the reaction L-citrulline + L-aspartate + ATP = 2-(N(omega)-L-arginino)succinate + AMP + diphosphate + H(+). Its pathway is amino-acid biosynthesis; L-arginine biosynthesis; L-arginine from L-ornithine and carbamoyl phosphate: step 2/3. The sequence is that of Argininosuccinate synthase from Bacillus cereus (strain AH820).